A 98-amino-acid chain; its full sequence is MIDRATVEKIAHLARLEINSGEEEQFALQLSGILDYFEQLSELDTENVLPTTRAIEIQNITRADSNRLYPDHEVLVQESPAPEGDYFLVPRILNTDED.

The protein belongs to the GatC family. As to quaternary structure, heterotrimer of A, B and C subunits.

It catalyses the reaction L-glutamyl-tRNA(Gln) + L-glutamine + ATP + H2O = L-glutaminyl-tRNA(Gln) + L-glutamate + ADP + phosphate + H(+). The enzyme catalyses L-aspartyl-tRNA(Asn) + L-glutamine + ATP + H2O = L-asparaginyl-tRNA(Asn) + L-glutamate + ADP + phosphate + 2 H(+). Functionally, allows the formation of correctly charged Asn-tRNA(Asn) or Gln-tRNA(Gln) through the transamidation of misacylated Asp-tRNA(Asn) or Glu-tRNA(Gln) in organisms which lack either or both of asparaginyl-tRNA or glutaminyl-tRNA synthetases. The reaction takes place in the presence of glutamine and ATP through an activated phospho-Asp-tRNA(Asn) or phospho-Glu-tRNA(Gln). This chain is Aspartyl/glutamyl-tRNA(Asn/Gln) amidotransferase subunit C, found in Microcystis aeruginosa (strain NIES-843 / IAM M-2473).